The following is a 534-amino-acid chain: Pentatricopeptide repeat-containing protein At5g08305 (534 aa).

PPR repeat units lie at residues Pro-41–Pro-71, Pro-72–Pro-106, Asp-107–Trp-141, Asp-142–Lys-172, Asn-173–Arg-203, Asp-204–Lys-238, Asn-240–Leu-274, Thr-275–Lys-305, Asp-308–Pro-342, Asp-343–Pro-377, and Lys-378–Lys-408. A type E motif region spans residues Met-413 to Asp-488. The type E(+) motif stretch occupies residues Gly-489–Asn-519.

The protein belongs to the PPR family. PCMP-E subfamily.

This Arabidopsis thaliana (Mouse-ear cress) protein is Pentatricopeptide repeat-containing protein At5g08305 (PCMP-E105).